A 209-amino-acid polypeptide reads, in one-letter code: MKILQVNSSARNFANGVGSVSSQLAGELVARLRDGEPTASVVVRDLARTPHPVLDEAALQALFTPADQRTPAQAERVALDDALIAEIQAADVVVIAAPMFNFGITAQLKNWIDAIARAKVTFQYTANGPEGLLKGKRVHVVLTRGGVYRDQASDNQVPYLRQVLGFLGMTDVEFIYAERQGMGPEASAQGVAEAREQIAALLQLGTATA.

FMN contacts are provided by residues serine 9, serine 19–serine 21, and threonine 143–glycine 146.

It belongs to the azoreductase type 1 family. In terms of assembly, homodimer. Requires FMN as cofactor.

It carries out the reaction 2 a quinone + NADH + H(+) = 2 a 1,4-benzosemiquinone + NAD(+). The catalysed reaction is N,N-dimethyl-1,4-phenylenediamine + anthranilate + 2 NAD(+) = 2-(4-dimethylaminophenyl)diazenylbenzoate + 2 NADH + 2 H(+). In terms of biological role, quinone reductase that provides resistance to thiol-specific stress caused by electrophilic quinones. Its function is as follows. Also exhibits azoreductase activity. Catalyzes the reductive cleavage of the azo bond in aromatic azo compounds to the corresponding amines. This is FMN-dependent NADH:quinone oxidoreductase from Leptothrix cholodnii (strain ATCC 51168 / LMG 8142 / SP-6) (Leptothrix discophora (strain SP-6)).